A 328-amino-acid chain; its full sequence is L-lactate dehydrogenase (328 aa).

Residues Val18, Glu39, Lys46, Tyr71, and 85-86 (GA) contribute to the NAD(+) site. The substrate site is built by Gln88 and Arg94. NAD(+)-binding positions include Ser107, 124-126 (AAN), and Ser149. 126-129 (NPVD) provides a ligand contact to substrate. 154–157 (DSAR) contributes to the substrate binding site. Beta-D-fructose 1,6-bisphosphate contacts are provided by Arg159 and His174. His181 (proton acceptor) is an active-site residue. Tyr226 is subject to Phosphotyrosine. Residue Thr235 participates in substrate binding.

This sequence belongs to the LDH/MDH superfamily. LDH family. In terms of assembly, homotetramer.

Its subcellular location is the cytoplasm. The catalysed reaction is (S)-lactate + NAD(+) = pyruvate + NADH + H(+). The protein operates within fermentation; pyruvate fermentation to lactate; (S)-lactate from pyruvate: step 1/1. With respect to regulation, allosterically activated by fructose 1,6-bisphosphate (FBP). Functionally, catalyzes the conversion of lactate to pyruvate. This chain is L-lactate dehydrogenase, found in Streptococcus sanguinis (strain SK36).